Here is a 332-residue protein sequence, read N- to C-terminus: L-lactate dehydrogenase A chain (332 aa).

At lysine 5 the chain carries N6-acetyllysine; alternate. Residue lysine 5 is modified to N6-succinyllysine; alternate. Lysine 14 carries the post-translational modification N6-acetyllysine. Threonine 18 is subject to Phosphothreonine. Position 29–57 (29–57 (GAVGMACAISILMKDLADELALVDVIEDK)) interacts with NAD(+). Lysine 57 carries the N6-acetyllysine; alternate modification. Lysine 57 is covalently cross-linked (Glycyl lysine isopeptide (Lys-Gly) (interchain with G-Cter in SUMO2); alternate). Lysine 81 carries the N6-acetyllysine modification. Arginine 99 lines the NAD(+) pocket. A substrate-binding site is contributed by arginine 106. Lysine 118 carries the post-translational modification N6-acetyllysine; alternate. Lysine 118 is subject to N6-succinyllysine; alternate. At lysine 126 the chain carries N6-acetyllysine. Asparagine 138 serves as a coordination point for NAD(+). 2 residues coordinate substrate: asparagine 138 and arginine 169. The Proton acceptor role is filled by histidine 193. Residue lysine 232 is modified to N6-acetyllysine. Tyrosine 239 carries the phosphotyrosine modification. An N6-acetyllysine modification is found at lysine 243. Threonine 248 is a substrate binding site. 2 positions are modified to phosphothreonine: threonine 309 and threonine 322.

It belongs to the LDH/MDH superfamily. LDH family. As to quaternary structure, homotetramer. Interacts with PTEN upstream reading frame protein MP31. In terms of processing, ISGylated.

The protein localises to the cytoplasm. The catalysed reaction is (S)-lactate + NAD(+) = pyruvate + NADH + H(+). It functions in the pathway fermentation; pyruvate fermentation to lactate; (S)-lactate from pyruvate: step 1/1. Its function is as follows. Interconverts simultaneously and stereospecifically pyruvate and lactate with concomitant interconversion of NADH and NAD(+). This is L-lactate dehydrogenase A chain (LDHA) from Monodelphis domestica (Gray short-tailed opossum).